The chain runs to 108 residues: Pyrimidine/purine nucleoside phosphorylase (108 aa).

It belongs to the nucleoside phosphorylase PpnP family.

It catalyses the reaction a purine D-ribonucleoside + phosphate = a purine nucleobase + alpha-D-ribose 1-phosphate. It carries out the reaction adenosine + phosphate = alpha-D-ribose 1-phosphate + adenine. The enzyme catalyses cytidine + phosphate = cytosine + alpha-D-ribose 1-phosphate. The catalysed reaction is guanosine + phosphate = alpha-D-ribose 1-phosphate + guanine. It catalyses the reaction inosine + phosphate = alpha-D-ribose 1-phosphate + hypoxanthine. It carries out the reaction thymidine + phosphate = 2-deoxy-alpha-D-ribose 1-phosphate + thymine. The enzyme catalyses uridine + phosphate = alpha-D-ribose 1-phosphate + uracil. The catalysed reaction is xanthosine + phosphate = alpha-D-ribose 1-phosphate + xanthine. Its function is as follows. Catalyzes the phosphorolysis of diverse nucleosides, yielding D-ribose 1-phosphate and the respective free bases. Can use uridine, adenosine, guanosine, cytidine, thymidine, inosine and xanthosine as substrates. Also catalyzes the reverse reactions. This is Pyrimidine/purine nucleoside phosphorylase from Acinetobacter baumannii (strain AB307-0294).